The chain runs to 156 residues: Putative HTH-type transcriptional regulator YwgB (156 aa).

In terms of domain architecture, HTH rrf2-type spans 2-133; sequence KMKSGMEQAV…REESLQHVMD (132 aa).

The chain is Putative HTH-type transcriptional regulator YwgB (ywgB) from Bacillus subtilis (strain 168).